Consider the following 163-residue polypeptide: Calcium-binding protein I (163 aa).

3 EF-hand domains span residues 20-42, 82-117, and 118-153; these read DKNK…NSKN, KPEI…LGCG, and NSKK…LKQD. Residues aspartate 95, asparagine 97, aspartate 99, methionine 101, glutamate 106, aspartate 131, asparagine 133, glutamate 135, serine 137, and aspartate 142 each coordinate Ca(2+).

This chain is Calcium-binding protein I (cbpI), found in Dictyostelium discoideum (Social amoeba).